The sequence spans 98 residues: NADH-ubiquinone oxidoreductase chain 4L (98 aa).

The next 3 helical transmembrane spans lie at 1–21, 29–49, and 61–81; these read MSMV…GLLV, SLLC…ITIL, and IILL…LVMV.

The protein belongs to the complex I subunit 4L family. As to quaternary structure, core subunit of respiratory chain NADH dehydrogenase (Complex I) which is composed of 45 different subunits.

It localises to the mitochondrion inner membrane. It catalyses the reaction a ubiquinone + NADH + 5 H(+)(in) = a ubiquinol + NAD(+) + 4 H(+)(out). Its function is as follows. Core subunit of the mitochondrial membrane respiratory chain NADH dehydrogenase (Complex I) which catalyzes electron transfer from NADH through the respiratory chain, using ubiquinone as an electron acceptor. Part of the enzyme membrane arm which is embedded in the lipid bilayer and involved in proton translocation. The chain is NADH-ubiquinone oxidoreductase chain 4L (MT-ND4L) from Mephitis mephitis (Striped skunk).